Here is a 161-residue protein sequence, read N- to C-terminus: Large ribosomal subunit protein uL10 (161 aa).

The protein belongs to the universal ribosomal protein uL10 family. In terms of assembly, part of the ribosomal stalk of the 50S ribosomal subunit. The N-terminus interacts with L11 and the large rRNA to form the base of the stalk. The C-terminus forms an elongated spine to which L12 dimers bind in a sequential fashion forming a multimeric L10(L12)X complex.

Functionally, forms part of the ribosomal stalk, playing a central role in the interaction of the ribosome with GTP-bound translation factors. The protein is Large ribosomal subunit protein uL10 of Malacoplasma penetrans (strain HF-2) (Mycoplasma penetrans).